A 290-amino-acid chain; its full sequence is Elongation factor Ts (290 aa).

An involved in Mg(2+) ion dislocation from EF-Tu region spans residues Thr-87–Val-90.

It belongs to the EF-Ts family.

It is found in the cytoplasm. Its function is as follows. Associates with the EF-Tu.GDP complex and induces the exchange of GDP to GTP. It remains bound to the aminoacyl-tRNA.EF-Tu.GTP complex up to the GTP hydrolysis stage on the ribosome. The polypeptide is Elongation factor Ts (tsf) (Treponema pallidum (strain Nichols)).